We begin with the raw amino-acid sequence, 196 residues long: Heat shock protein beta-8 (196 aa).

The interval 1–34 is disordered; it reads MADGQMPFPCHYTSRRRRDPFRDSPLSSRLLDDG. Over residues 23–34 the composition is skewed to low complexity; it reads DSPLSSRLLDDG. 2 positions are modified to phosphoserine: S24 and S57. At T63 the chain carries Phosphothreonine. R71 and R78 each carry asymmetric dimethylarginine. The sHSP domain occupies 74–185; the sequence is TAMTRFGVPA…PFGESSFNNE (112 aa). Position 87 is a phosphoserine (S87). Positions 176-196 are disordered; that stretch reads PFGESSFNNELPQDGQEVTCT. Residues 178–196 are compositionally biased toward polar residues; that stretch reads GESSFNNELPQDGQEVTCT.

This sequence belongs to the small heat shock protein (HSP20) family. Monomer. Forms a ternary complex with BAG3 and HSPA1A. Component of the chaperone-assisted selective autophagy (CASA) complex consisting of BAG3, HSPA8/HSC70, HSPB8 and STUB1/CHIP. Interacts with HSPB1. Interacts with DNAJB6. Interacts with BAG3. Phosphorylated.

The protein resides in the cytoplasm. It localises to the nucleus. Involved in the chaperone-assisted selective autophagy (CASA), a crucial process for protein quality control, particularly in mechanical strained cells and tissues such as muscle. Displays temperature-dependent chaperone activity. The chain is Heat shock protein beta-8 (HSPB8) from Bos taurus (Bovine).